The chain runs to 392 residues: Proteasome-activating nucleotidase (392 aa).

The stretch at 19–53 (IVRLLEEKIESLTKELEKLRQDLNWYKGELEKLLA) forms a coiled coil. Residues 178-183 (GTGKTL) and Tyr317 contribute to the ATP site. The interval 390–392 (KYV) is docks into pockets in the proteasome alpha-ring to cause gate opening.

Belongs to the AAA ATPase family. As to quaternary structure, homohexamer. The hexameric complex has a two-ring architecture resembling a top hat that caps the 20S proteasome core at one or both ends. Upon ATP-binding, the C-terminus of PAN interacts with the alpha-rings of the proteasome core by binding to the intersubunit pockets.

It localises to the cytoplasm. ATPase which is responsible for recognizing, binding, unfolding and translocation of substrate proteins into the archaeal 20S proteasome core particle. Is essential for opening the gate of the 20S proteasome via an interaction with its C-terminus, thereby allowing substrate entry and access to the site of proteolysis. Thus, the C-termini of the proteasomal ATPase function like a 'key in a lock' to induce gate opening and therefore regulate proteolysis. Unfolding activity requires energy from ATP hydrolysis, whereas ATP binding alone promotes ATPase-20S proteasome association which triggers gate opening, and supports translocation of unfolded substrates. The chain is Proteasome-activating nucleotidase from Sulfurisphaera tokodaii (strain DSM 16993 / JCM 10545 / NBRC 100140 / 7) (Sulfolobus tokodaii).